The following is a 28-amino-acid chain: RQLNPSSQELQSPQQSYLQQPYPQNPYL.

Residues 1–28 (RQLNPSSQELQSPQQSYLQQPYPQNPYL) are disordered.

In terms of tissue distribution, developing endosperm.

Its function is as follows. Sulfur-poor seed storage protein. The protein is C-hordein of Hordeum vulgare subsp. spontaneum (Wild barley).